The following is a 284-amino-acid chain: Bifunctional protein FolD 1 (284 aa).

NADP(+)-binding positions include 166–168 (GAS) and isoleucine 232.

It belongs to the tetrahydrofolate dehydrogenase/cyclohydrolase family. In terms of assembly, homodimer.

The catalysed reaction is (6R)-5,10-methylene-5,6,7,8-tetrahydrofolate + NADP(+) = (6R)-5,10-methenyltetrahydrofolate + NADPH. It catalyses the reaction (6R)-5,10-methenyltetrahydrofolate + H2O = (6R)-10-formyltetrahydrofolate + H(+). The protein operates within one-carbon metabolism; tetrahydrofolate interconversion. Functionally, catalyzes the oxidation of 5,10-methylenetetrahydrofolate to 5,10-methenyltetrahydrofolate and then the hydrolysis of 5,10-methenyltetrahydrofolate to 10-formyltetrahydrofolate. This is Bifunctional protein FolD 1 from Pseudomonas syringae pv. syringae (strain B728a).